Consider the following 275-residue polypeptide: Formamidopyrimidine-DNA glycosylase (275 aa).

The Schiff-base intermediate with DNA role is filled by P2. E3 serves as the catalytic Proton donor. K59 acts as the Proton donor; for beta-elimination activity in catalysis. Residues H92, R111, and R155 each coordinate DNA. Residues 240–274 form an FPG-type zinc finger; that stretch reads NVYGRAGKACPKCGTTIEKQVLGQRSSYYCPQCQR. The active-site Proton donor; for delta-elimination activity is the R264.

It belongs to the FPG family. As to quaternary structure, monomer. Zn(2+) serves as cofactor.

It carries out the reaction Hydrolysis of DNA containing ring-opened 7-methylguanine residues, releasing 2,6-diamino-4-hydroxy-5-(N-methyl)formamidopyrimidine.. The enzyme catalyses 2'-deoxyribonucleotide-(2'-deoxyribose 5'-phosphate)-2'-deoxyribonucleotide-DNA = a 3'-end 2'-deoxyribonucleotide-(2,3-dehydro-2,3-deoxyribose 5'-phosphate)-DNA + a 5'-end 5'-phospho-2'-deoxyribonucleoside-DNA + H(+). In terms of biological role, involved in base excision repair of DNA damaged by oxidation or by mutagenic agents. Acts as a DNA glycosylase that recognizes and removes damaged bases. Has a preference for oxidized purines, such as 7,8-dihydro-8-oxoguanine (8-oxoG). Has AP (apurinic/apyrimidinic) lyase activity and introduces nicks in the DNA strand. Cleaves the DNA backbone by beta-delta elimination to generate a single-strand break at the site of the removed base with both 3'- and 5'-phosphates. The protein is Formamidopyrimidine-DNA glycosylase of Magnetococcus marinus (strain ATCC BAA-1437 / JCM 17883 / MC-1).